The following is a 296-amino-acid chain: 4-hydroxy-tetrahydrodipicolinate synthase (296 aa).

Thr50 contributes to the pyruvate binding site. The active-site Proton donor/acceptor is the Tyr138. Lys166 (schiff-base intermediate with substrate) is an active-site residue. A pyruvate-binding site is contributed by Ile208.

It belongs to the DapA family. As to quaternary structure, homotetramer; dimer of dimers.

It localises to the cytoplasm. The catalysed reaction is L-aspartate 4-semialdehyde + pyruvate = (2S,4S)-4-hydroxy-2,3,4,5-tetrahydrodipicolinate + H2O + H(+). Its pathway is amino-acid biosynthesis; L-lysine biosynthesis via DAP pathway; (S)-tetrahydrodipicolinate from L-aspartate: step 3/4. Functionally, catalyzes the condensation of (S)-aspartate-beta-semialdehyde [(S)-ASA] and pyruvate to 4-hydroxy-tetrahydrodipicolinate (HTPA). In Ruthia magnifica subsp. Calyptogena magnifica, this protein is 4-hydroxy-tetrahydrodipicolinate synthase.